Reading from the N-terminus, the 104-residue chain is Large ribosomal subunit protein bL21 (104 aa).

The protein belongs to the bacterial ribosomal protein bL21 family. Part of the 50S ribosomal subunit. Contacts protein L20.

In terms of biological role, this protein binds to 23S rRNA in the presence of protein L20. This chain is Large ribosomal subunit protein bL21, found in Lactococcus lactis subsp. cremoris (strain MG1363).